Reading from the N-terminus, the 150-residue chain is Ribosomal RNA large subunit methyltransferase H (150 aa).

Residues alanine 100 and 118-123 (LSEMTF) contribute to the S-adenosyl-L-methionine site.

It belongs to the RNA methyltransferase RlmH family. As to quaternary structure, homodimer.

Its subcellular location is the cytoplasm. It carries out the reaction pseudouridine(1915) in 23S rRNA + S-adenosyl-L-methionine = N(3)-methylpseudouridine(1915) in 23S rRNA + S-adenosyl-L-homocysteine + H(+). Its function is as follows. Specifically methylates the pseudouridine at position 1915 (m3Psi1915) in 23S rRNA. This is Ribosomal RNA large subunit methyltransferase H from Helicobacter pylori (strain ATCC 700392 / 26695) (Campylobacter pylori).